An 840-amino-acid chain; its full sequence is V-type proton ATPase 116 kDa subunit a 4 (840 aa).

Residues 1-390 (MVSVFRSEEM…DAYGVGSYRE (390 aa)) are Cytoplasmic-facing. Residues 391-409 (INPAPYTIITFPFLFAVMF) traverse the membrane as a helical segment. The Vacuolar portion of the chain corresponds to 410 to 411 (GD). A helical membrane pass occupies residues 412–428 (CGHGTVMLLAALWMILN). Topologically, residues 429-443 (ERRLLSQKTDNEIWN) are cytoplasmic. A helical membrane pass occupies residues 444–473 (TFFHGRYLILLMGIFSIYTGLIYNDCFSKS). The Vacuolar segment spans residues 474-538 (LNIFGSSWSV…ASNKLTFLNS (65 aa)). The chain crosses the membrane as a helical span at residues 539–558 (YKMKMSVILGIVQMVFGVIL). Residues 559 to 576 (SLFNHIYFRRTLNIILQF) are Cytoplasmic-facing. The chain crosses the membrane as a helical span at residues 577-597 (IPEMIFILCLFGYLVFMIIFK). Residues 598 to 642 (WCCFDVHVSQHAPSILIHFINMFLFNYSDSSNAPLYKHQQEVQSF) are Vacuolar-facing. Residues 643–662 (FVVMALISVPWMLLIKPFIL) form a helical membrane-spanning segment. The Cytoplasmic portion of the chain corresponds to 663–727 (RASHRKSQLQ…DVFVHQAIHT (65 aa)). Residues 675 to 704 (RIQEDATENIEGDSSSPSSRSGQRTSADTH) are disordered. A helical membrane pass occupies residues 728–752 (IEYCLGCISNTASYLRLWALSLAHA). At 753-773 (QLSEVLWTMVMNSGLQTRGWG) the chain is on the vacuolar side. A helical transmembrane segment spans residues 774–812 (GIVGVFIIFAVFAVLTVAILLIMEGLSAFLHALRLHWVE). The Cytoplasmic portion of the chain corresponds to 813–840 (FQNKFYVGDGYKFSPFSFKHILDGTAEE).

This sequence belongs to the V-ATPase 116 kDa subunit family. As to quaternary structure, V-ATPase is a heteromultimeric enzyme made up of two complexes: the ATP-hydrolytic V1 complex and the proton translocation V0 complex. The V1 complex consists of three catalytic AB heterodimers that form a heterohexamer, three peripheral stalks each consisting of EG heterodimers, one central rotor including subunits D and F, and the regulatory subunits C and H. The proton translocation complex V0 consists of the proton transport subunit a, a ring of proteolipid subunits c9c'', rotary subunit d, subunits e and f, and the accessory subunits ATP6AP1/Ac45 and ATP6AP2/PRR. Interacts with the V1 complex V-ATPase subunit A ATP6V1A. Interacts with the V0 complex V-ATPase subunit c ATP6V0C. Expressed in adult and fetal kidney. Found in the inner ear.

The protein localises to the apical cell membrane. It is found in the basolateral cell membrane. Functionally, subunit of the V0 complex of vacuolar(H+)-ATPase (V-ATPase), a multisubunit enzyme composed of a peripheral complex (V1) that hydrolyzes ATP and a membrane integral complex (V0) that translocates protons. V-ATPase is responsible for acidifying and maintaining the pH of intracellular compartments and in some cell types, is targeted to the plasma membrane, where it is responsible for acidifying the extracellular environment. Involved in normal vectorial acid transport into the urine by the kidney. The sequence is that of V-type proton ATPase 116 kDa subunit a 4 (ATP6V0A4) from Homo sapiens (Human).